We begin with the raw amino-acid sequence, 418 residues long: Trans-acting enoyl reductase (418 aa).

Belongs to the saccharopine dehydrogenase family. Enoyl reductase subfamily.

Involved in the reduction of the double bond between C-4 and C-5 during phthiocerol dimycocerosates (DIM A) and glycosylated phenolphthiocerol dimycocerosates (PGL) biosynthesis. The polypeptide is Trans-acting enoyl reductase (Mycobacterium ulcerans (strain Agy99)).